The following is a 311-amino-acid chain: Fluoride export protein 1 (311 aa).

Over 1 to 6 (MLLTQS) the chain is Cytoplasmic. A helical transmembrane segment spans residues 7–25 (YFCIMSMLGTLARLGLTAL). Residues 26–29 (NTYP) are Extracellular-facing. The helical transmembrane segment at 30 to 50 (GAPFSGLLWVQFVGCVIMGFC) threads the bilayer. The Cytoplasmic segment spans residues 51–65 (QTESVFFPRPKHNAT). A helical transmembrane segment spans residues 66–86 (FLLAITTGFCGSLTTFSSWML). The Extracellular segment spans residues 87–106 (QMFTGMANLDPFERRGRGYS). A helical membrane pass occupies residues 107–127 (FLSVVSDFMVTMCIAMSSLIW). At 128–154 (GKQIGKTTGQWRIGKVAFAWPIPAHTH) the chain is on the cytoplasmic side. The helical transmembrane segment at 155–175 (IVVRVLLLLLSICFFVGAAFY) threads the bilayer. Topologically, residues 176–186 (TAYTTNVTHRG) are extracellular. N181 is a glycosylation site (N-linked (GlcNAc...) asparagine). A helical transmembrane segment spans residues 187 to 207 (IGFSLIFSPFAALTRLYLARF). At 208-212 (LNSPQ) the chain is on the cytoplasmic side. Residues 213-233 (YFIPYGTLCANVFATLLLSIM) form a helical membrane-spanning segment. The Extracellular portion of the chain corresponds to 234 to 250 (YMIPQITHCTPVSRSVM). Residues 251–268 (YGIQNGFCAVLSTLSTFS) traverse the membrane as a helical segment. Residues 269 to 278 (NELHTMPIKR) lie on the Cytoplasmic side of the membrane. A helical transmembrane segment spans residues 279–299 (AYIYCIISVAISFSICVIVDG). Over 300 to 311 (ATAWGHGYTEKY) the chain is Extracellular.

Belongs to the fluoride channel Fluc/FEX (TC 1.A.43) family.

It is found in the cell membrane. The enzyme catalyses fluoride(in) = fluoride(out). Fluoride channel required for the rapid expulsion of cytoplasmic fluoride. The polypeptide is Fluoride export protein 1 (fex1) (Schizosaccharomyces pombe (strain 972 / ATCC 24843) (Fission yeast)).